The sequence spans 178 residues: CCHC-type zinc finger nucleic acid binding protein (178 aa).

S2 carries the N-acetylserine modification. The CCHC-type 1 zinc-finger motif lies at 4 to 21 (NECFKCGRSGHWARECPT). Position 8 is an N6-acetyllysine (K8). Omega-N-methylarginine; by PRMT1 occurs at positions 25 and 27. Residues 25–38 (RGRGMRSRGRGGFT) are RNA-binding Arg/Gly-rich region (RGG-box). R32 and R34 each carry omega-N-methylarginine. S49 is subject to Phosphoserine. 6 consecutive CCHC-type zinc fingers follow at residues 52–69 (DICY…DCDL), 72–90 (DEAC…DCKE), 97–114 (QCCY…DCDH), 118–135 (QKCY…DCTK), 136–153 (VKCY…NCSK), and 157–174 (VNCY…ECTI). Omega-N-methylarginine is present on residues D72, G79, and R80.

Associates with the 40S ribosomal subunit, the 80S ribosome and with polysomes. Post-translationally, arginine methylation by PRMT1 in the Arg/Gly-rich region impedes RNA binding.

The protein resides in the nucleus. It is found in the cytoplasm. Its subcellular location is the endoplasmic reticulum. Functionally, single-stranded DNA-binding protein that preferentially binds to the sterol regulatory element (SRE) sequence 5'-GTGCGGTG-3', and thereby mediates transcriptional repression. Has a role as transactivator of the Myc promoter. Binds single-stranded RNA in a sequence-specific manner. Binds G-rich elements in target mRNA coding sequences. Prevents G-quadruplex structure formation in vitro, suggesting a role in supporting translation by resolving stable structures on mRNAs. This Mus musculus (Mouse) protein is CCHC-type zinc finger nucleic acid binding protein.